Here is a 416-residue protein sequence, read N- to C-terminus: MEFPKKAEIIAVGSELLLGQIANTNAQFISKQLAEIGVNVFYHTAVGDNPERLKQVIRIAEERSDFIIFSGGLGPTKDDLTKETIANTLGRPLVLNDEAFQSIEDYFKRTKRTMSPNNRKQALVIEGSDVLANHFGMAPGMLTEHESRYYMLLPGPPSELRPMFENEAKPLLLKKMGSNEKIVSTVLRFFGIGESQLEADLEDIIDAQTNPTIAPLAADGEVTLRLTAKHADEKETERLLKETEAVILERVGEFFYGYDDTSLVKELSIACKEKGITISAAESFTGGLFSEWLTDHSGASKLFAGGVVCYTNDVKQNVLGVKKETLDRFGAVSKECASELAKGVQKLTGSDIGISFTGVAGPDAQEGHEPGHVFIGISANGKEEVHEFHFAGSRTGIRKRGAKYGCHLILKLLEQK.

This sequence belongs to the CinA family.

This Bacillus subtilis (strain 168) protein is Putative competence-damage inducible protein.